A 346-amino-acid chain; its full sequence is Elongation factor Ts (346 aa).

Positions 80-83 (TDFV) are involved in Mg(2+) ion dislocation from EF-Tu.

The protein belongs to the EF-Ts family.

The protein resides in the cytoplasm. Associates with the EF-Tu.GDP complex and induces the exchange of GDP to GTP. It remains bound to the aminoacyl-tRNA.EF-Tu.GTP complex up to the GTP hydrolysis stage on the ribosome. The chain is Elongation factor Ts from Streptococcus agalactiae serotype Ia (strain ATCC 27591 / A909 / CDC SS700).